Consider the following 805-residue polypeptide: Translation initiation factor IF-2 (805 aa).

Disordered stretches follow at residues 68 to 89 (VVTEQAQAPAEVEEKKEEEKKE) and 141 to 215 (KEKE…KEKK). The segment covering 79-89 (VEEKKEEEKKE) has biased composition (basic and acidic residues). The tr-type G domain occupies 306 to 474 (PRPPIVVVMG…MILLLADILE (169 aa)). The G1 stretch occupies residues 315 to 322 (GHVDHGKT). 315–322 (GHVDHGKT) lines the GTP pocket. A G2 region spans residues 340-344 (GITQH). The tract at residues 362–365 (DTPG) is G3. Residues 362-366 (DTPGH) and 416-419 (NKID) each bind GTP. The interval 416–419 (NKID) is G4. Positions 452 to 454 (SAK) are G5.

Belongs to the TRAFAC class translation factor GTPase superfamily. Classic translation factor GTPase family. IF-2 subfamily.

It is found in the cytoplasm. Functionally, one of the essential components for the initiation of protein synthesis. Protects formylmethionyl-tRNA from spontaneous hydrolysis and promotes its binding to the 30S ribosomal subunits. Also involved in the hydrolysis of GTP during the formation of the 70S ribosomal complex. This chain is Translation initiation factor IF-2 (infB), found in Aquifex aeolicus (strain VF5).